The following is a 662-amino-acid chain: Mitochondrial Rho GTPase 1 (662 aa).

Residues 1 to 634 (MTKETIRVVI…AKDVDYRQTA (634 aa)) are Cytoplasmic-facing. A Miro 1 domain is found at 3–185 (KETIRVVICG…FYLCQRAITH (183 aa)). GTP is bound by residues 12–19 (GDEGVGKS), 62–64 (DTS), and 116–119 (NKCD). EF-hand domains are found at residues 201-236 (LAVMALKRIFLLSDLNQDSYLDDNEILGLQKKCFNK) and 330-365 (KGYRFLVDIFLKFDIDNDGGLNNQELHRLFKCTPGL). Residues Asp214, Asn216, Asp218, Tyr220, Glu225, Asp343, Asp345, Asp347, and Glu354 each contribute to the Ca(2+) site. In terms of domain architecture, Miro 2 spans 446–611 (RKVFNCFVIG…FIKITEAALD (166 aa)). GTP contacts are provided by residues 455-462 (GKPCCGKS), 491-495 (ELKGG), and 560-563 (SKAD). The chain crosses the membrane as a helical; Anchor for type IV membrane protein span at residues 635-655 (LIFGSTVGFVALCSFTLMKLF). Residues 656–662 (KSSKFSK) are Mitochondrial intermembrane-facing.

This sequence belongs to the mitochondrial Rho GTPase family.

The protein localises to the mitochondrion outer membrane. Its function is as follows. Mitochondrial GTPase involved in mitochondrial trafficking. Probably involved in control of anterograde transport of mitochondria and their subcellular distribution. The sequence is that of Mitochondrial Rho GTPase 1 (GEM1) from Saccharomyces cerevisiae (strain ATCC 204508 / S288c) (Baker's yeast).